Reading from the N-terminus, the 202-residue chain is Ribosomal RNA small subunit methyltransferase G (202 aa).

Residues glycine 75, phenylalanine 80, 125-126 (VQ), and arginine 139 each bind S-adenosyl-L-methionine.

The protein belongs to the methyltransferase superfamily. RNA methyltransferase RsmG family.

It is found in the cytoplasm. Functionally, specifically methylates the N7 position of a guanine in 16S rRNA. This is Ribosomal RNA small subunit methyltransferase G from Mesomycoplasma hyopneumoniae (strain 232) (Mycoplasma hyopneumoniae).